The sequence spans 469 residues: Ribosomal protein uS12 methylthiotransferase RimO (469 aa).

An MTTase N-terminal domain is found at 34-144 (NKIGFVSLGC…VLEHVHQFAP (111 aa)). Residues Cys43, Cys79, Cys108, Cys176, Cys180, and Cys183 each contribute to the [4Fe-4S] cluster site. Positions 162–399 (LTPKHYAYLK…MLVQQEISAA (238 aa)) constitute a Radical SAM core domain. The TRAM domain occupies 402-468 (QKRIGSTMKV…EYDLWGSLVR (67 aa)).

Belongs to the methylthiotransferase family. RimO subfamily. [4Fe-4S] cluster is required as a cofactor.

The protein localises to the cytoplasm. It carries out the reaction L-aspartate(89)-[ribosomal protein uS12]-hydrogen + (sulfur carrier)-SH + AH2 + 2 S-adenosyl-L-methionine = 3-methylsulfanyl-L-aspartate(89)-[ribosomal protein uS12]-hydrogen + (sulfur carrier)-H + 5'-deoxyadenosine + L-methionine + A + S-adenosyl-L-homocysteine + 2 H(+). In terms of biological role, catalyzes the methylthiolation of an aspartic acid residue of ribosomal protein uS12. This Vibrio vulnificus (strain YJ016) protein is Ribosomal protein uS12 methylthiotransferase RimO.